The sequence spans 1115 residues: G-protein coupled receptor GRL101 (1115 aa).

The first 24 residues, 1–24, serve as a signal peptide directing secretion; that stretch reads MATMSGTTIVCLIYLTTMLGNSQG. The Extracellular segment spans residues 25-767; the sequence is VNLKIESPSP…SCEDLMSNHV (743 aa). 12 consecutive LDL-receptor class A domains span residues 36-79, 77-115, 116-155, 156-196, 195-232, 231-269, 272-318, 320-363, 365-403, 404-442, 444-485, and 486-525; these read TLCS…TCGC, CGCL…ECDI, YICP…ICER, RECV…ACDS, DSDK…NCKL, KLCD…VCAN, YGCP…YCSN, SECK…SCLA, PKCS…NCEN, HQCA…DCDP, PVCE…NCSQ, and HICL…NCRY. 16 disulfides stabilise this stretch: Cys38–Cys53, Cys46–Cys66, Cys60–Cys77, Cys79–Cys91, Cys86–Cys104, Cys98–Cys113, Cys118–Cys131, Cys138–Cys153, Cys158–Cys170, Cys165–Cys183, Cys177–Cys194, Cys202–Cys220, Cys214–Cys230, Cys233–Cys245, Cys240–Cys258, and Cys252–Cys267. N-linked (GlcNAc...) asparagine glycosylation occurs at Asn87. Residue Asn166 is glycosylated (N-linked (GlcNAc...) asparagine). Asn269 carries an N-linked (GlcNAc...) asparagine glycan. 3 disulfide bridges follow: Cys274–Cys291, Cys282–Cys304, and Cys298–Cys316. Residue Asn318 is glycosylated (N-linked (GlcNAc...) asparagine). 15 disulfide bridges follow: Cys322–Cys339, Cys334–Cys352, Cys346–Cys361, Cys367–Cys379, Cys374–Cys392, Cys386–Cys401, Cys406–Cys418, Cys413–Cys431, Cys425–Cys440, Cys446–Cys458, Cys453–Cys474, Cys465–Cys483, Cys488–Cys500, Cys495–Cys513, and Cys507–Cys523. The N-linked (GlcNAc...) asparagine glycan is linked to Asn482. The N-linked (GlcNAc...) asparagine glycan is linked to Asn502. In terms of domain architecture, LRRNT spans 518–562; it reads WDENNCRYWCPHGQAICQCEGVTMDCTGQKLKEMPVQQMEEDLSK. Residue Asn571 is glycosylated (N-linked (GlcNAc...) asparagine). LRR repeat units follow at residues 584–605, 608–629, 632–653, 656–677, 680–701, and 704–725; these read KVTY…SFQN, KLTH…SLLG, NLKQ…TFSS, HLTV…MFKG, QITV…AFNN, and NVRL…VFMG. N-linked (GlcNAc...) asparagine glycans are attached at residues Asn618 and Asn624. N-linked (GlcNAc...) asparagine glycosylation is present at Asn685. A helical transmembrane segment spans residues 768 to 788; the sequence is LRVSIWVLGVIALVGNFVVIF. Topologically, residues 789-801 are cytoplasmic; that stretch reads WRVRDFRGGKVHS. The helical transmembrane segment at 802-822 threads the bilayer; the sequence is FLITNLAIGDFLMGVYLLIIA. The Extracellular segment spans residues 823-857; the sequence is TADTYYRGVYISHDENWKQSGLCQFAGFVSTFSSE. A helical transmembrane segment spans residues 858–878; it reads LSVLTLSTITLDRLICILFPL. Topologically, residues 879-887 are cytoplasmic; sequence RRTRLGLRQ. A helical transmembrane segment spans residues 888–908; the sequence is AIIVMSCIWVLVFLLAVLPLL. The Extracellular segment spans residues 909-941; sequence GFSYFENFYGRSGVCLALHVTPDRRPGWEYSVG. The chain crosses the membrane as a helical span at residues 942-962; the sequence is VFILLNLLSFVLIASSYLWMF. Topologically, residues 963-988 are cytoplasmic; sequence SVAKKTRSAVRTAESKNDNAMARRMT. The helical transmembrane segment at 989–1009 threads the bilayer; that stretch reads LIVMTDFCCWVPIIVLGFVSL. The Extracellular portion of the chain corresponds to 1010–1017; the sequence is AGARADDQ. The helical transmembrane segment at 1018–1038 threads the bilayer; the sequence is VYAWIAVFVLPLNSATNPVIY. At 1039–1115 the chain is on the cytoplasmic side; sequence TLSTAPFLGN…YYNTELHSDS (77 aa).

It belongs to the G-protein coupled receptor 1 family. As to expression, predominantly expressed in a small number of neurons within the central nervous system and to a lesser extent in the heart.

The protein resides in the cell membrane. Functionally, might directly transduce signals carried by large extracellular lipoprotein complexes into neuronal events. In Lymnaea stagnalis (Great pond snail), this protein is G-protein coupled receptor GRL101.